A 278-amino-acid chain; its full sequence is Putative glycosyltransferase EpsE (278 aa).

The protein belongs to the glycosyltransferase 2 family.

May be involved in the production of the exopolysaccharide (EPS) component of the extracellular matrix during biofilm formation. EPS is responsible for the adhesion of chains of cells into bundles. Required for biofilm maintenance. The polypeptide is Putative glycosyltransferase EpsE (epsE) (Bacillus subtilis (strain 168)).